The primary structure comprises 204 residues: Small ribosomal subunit protein uS4 (204 aa).

Residues 21 to 45 (GRPKSPINKREYGPGQHGQRRKKPS) are disordered. Residues 93–156 (RRLDAVVYRM…KQLAMVLDSV (64 aa)) form the S4 RNA-binding domain.

It belongs to the universal ribosomal protein uS4 family. Part of the 30S ribosomal subunit. Contacts protein S5. The interaction surface between S4 and S5 is involved in control of translational fidelity.

One of the primary rRNA binding proteins, it binds directly to 16S rRNA where it nucleates assembly of the body of the 30S subunit. In terms of biological role, with S5 and S12 plays an important role in translational accuracy. This is Small ribosomal subunit protein uS4 from Acidiphilium cryptum (strain JF-5).